The primary structure comprises 654 residues: Macrolide export ATP-binding/permease protein MacB (654 aa).

The ABC transporter domain maps to Ile-6–Pro-244. An ATP-binding site is contributed by Gly-42 to Ser-49. A run of 4 helical transmembrane segments spans residues Phe-278 to Gly-298, Leu-527 to Met-547, Val-584 to Phe-604, and Ser-619 to Ala-639.

It belongs to the ABC transporter superfamily. Macrolide exporter (TC 3.A.1.122) family. As to quaternary structure, homodimer.

Its subcellular location is the cell inner membrane. Non-canonical ABC transporter that contains transmembrane domains (TMD), which form a pore in the inner membrane, and an ATP-binding domain (NBD), which is responsible for energy generation. Confers resistance against macrolides. This is Macrolide export ATP-binding/permease protein MacB from Rhodopseudomonas palustris (strain HaA2).